Here is a 1201-residue protein sequence, read N- to C-terminus: DNA-directed RNA polymerase subunit beta' (1201 aa).

The Zn(2+) site is built by cysteine 60, cysteine 62, cysteine 75, and cysteine 78. Mg(2+) is bound by residues aspartate 449, aspartate 451, and aspartate 453. Residues cysteine 818, cysteine 892, cysteine 899, and cysteine 902 each coordinate Zn(2+).

This sequence belongs to the RNA polymerase beta' chain family. As to quaternary structure, the RNAP catalytic core consists of 2 alpha, 1 beta, 1 beta' and 1 omega subunit. When a sigma factor is associated with the core the holoenzyme is formed, which can initiate transcription. It depends on Mg(2+) as a cofactor. The cofactor is Zn(2+).

The catalysed reaction is RNA(n) + a ribonucleoside 5'-triphosphate = RNA(n+1) + diphosphate. In terms of biological role, DNA-dependent RNA polymerase catalyzes the transcription of DNA into RNA using the four ribonucleoside triphosphates as substrates. This Listeria welshimeri serovar 6b (strain ATCC 35897 / DSM 20650 / CCUG 15529 / CIP 8149 / NCTC 11857 / SLCC 5334 / V8) protein is DNA-directed RNA polymerase subunit beta'.